A 477-amino-acid polypeptide reads, in one-letter code: 3-isopropylmalate dehydratase large subunit (477 aa).

[4Fe-4S] cluster is bound by residues Cys358, Cys419, and Cys422.

This sequence belongs to the aconitase/IPM isomerase family. LeuC type 1 subfamily. Heterodimer of LeuC and LeuD. It depends on [4Fe-4S] cluster as a cofactor.

It catalyses the reaction (2R,3S)-3-isopropylmalate = (2S)-2-isopropylmalate. It functions in the pathway amino-acid biosynthesis; L-leucine biosynthesis; L-leucine from 3-methyl-2-oxobutanoate: step 2/4. Its function is as follows. Catalyzes the isomerization between 2-isopropylmalate and 3-isopropylmalate, via the formation of 2-isopropylmaleate. The sequence is that of 3-isopropylmalate dehydratase large subunit from Acinetobacter baylyi (strain ATCC 33305 / BD413 / ADP1).